Reading from the N-terminus, the 77-residue chain is Small ribosomal subunit protein bS16c (77 aa).

The protein belongs to the bacterial ribosomal protein bS16 family.

It localises to the plastid. It is found in the cyanelle. This Cyanophora paradoxa protein is Small ribosomal subunit protein bS16c.